Consider the following 551-residue polypeptide: Membrane protein insertase YidC (551 aa).

A helical transmembrane segment spans residues 3-23 (ANHIRILLLVTIAIMLISLMG). Low complexity predominate over residues 30–43 (PSNSSQSQTTQTQQ). A disordered region spans residues 30-61 (PSNSSQSQTTQTQQDNSHYNSDTPATTNVSTS). Residues 44 to 61 (DNSHYNSDTPATTNVSTS) are compositionally biased toward polar residues. The next 3 membrane-spanning stretches (helical) occupy residues 361 to 381 (LVGN…LIFY), 431 to 451 (LSGC…YWVL), and 504 to 524 (IMMF…SGLV).

This sequence belongs to the OXA1/ALB3/YidC family. Type 1 subfamily. In terms of assembly, interacts with the Sec translocase complex via SecD. Specifically interacts with transmembrane segments of nascent integral membrane proteins during membrane integration.

Its subcellular location is the cell inner membrane. In terms of biological role, required for the insertion and/or proper folding and/or complex formation of integral membrane proteins into the membrane. Involved in integration of membrane proteins that insert both dependently and independently of the Sec translocase complex, as well as at least some lipoproteins. Aids folding of multispanning membrane proteins. This Francisella philomiragia subsp. philomiragia (strain ATCC 25017 / CCUG 19701 / FSC 153 / O#319-036) protein is Membrane protein insertase YidC.